The sequence spans 338 residues: Transcription factor AP-4 (338 aa).

Positions 48–99 constitute a bHLH domain; the sequence is IRREIANSNERRRMQSINAGFQSLKTLIPHTDGEKLSKAAILQQTAEYIFSL. The tract at residues 100 to 120 is leucine-zipper 1; sequence EQEKTRLLQQNTQLKRFIQEL. The tract at residues 118-141 is disordered; the sequence is QELSGSSPKRRRAEDKDEGIGSPD. Residues Ser123, Ser124, and Ser139 each carry the phosphoserine modification. A Glycyl lysine isopeptide (Lys-Gly) (interchain with G-Cter in SUMO2) cross-link involves residue Lys147. A leucine-zipper 2 region spans residues 151–179; sequence LRREMIELRQQLDKERSVRMMLEEQVRSL. Residues Lys187, Lys189, and Lys285 each participate in a glycyl lysine isopeptide (Lys-Gly) (interchain with G-Cter in SUMO2) cross-link. A compositionally biased stretch (basic and acidic residues) spans 283–294; sequence QEKQELEEEQRR. Residues 283–338 form a disordered region; sequence QEKQELEEEQRRAVIVKPVRSCPEAPTSDTASDSEASDSDAMDQSREEPSGDGELP.

As to quaternary structure, efficient DNA binding requires dimerization with another bHLH protein. Homodimer.

It localises to the nucleus. Its function is as follows. Transcription factor that activates both viral and cellular genes by binding to the symmetrical DNA sequence 5'-CAGCTG-3'. The protein is Transcription factor AP-4 (TFAP4) of Homo sapiens (Human).